The sequence spans 117 residues: Small ribosomal subunit protein bS6 (117 aa).

Positions lysine 92–arginine 117 are disordered. Basic and acidic residues predominate over residues glutamine 105–arginine 117.

This sequence belongs to the bacterial ribosomal protein bS6 family.

Its function is as follows. Binds together with bS18 to 16S ribosomal RNA. In Dinoroseobacter shibae (strain DSM 16493 / NCIMB 14021 / DFL 12), this protein is Small ribosomal subunit protein bS6.